The sequence spans 657 residues: Threonine--tRNA ligase (657 aa).

Residues 7–70 enclose the TGS domain; the sequence is SQTQVTVTLP…SEDASIEIVT (64 aa). A catalytic region spans residues 253–555; the sequence is DHRKLGAELE…LIEHTGGNFP (303 aa). Residues Cys-351, His-402, and His-532 each contribute to the Zn(2+) site.

It belongs to the class-II aminoacyl-tRNA synthetase family. As to quaternary structure, homodimer. Zn(2+) is required as a cofactor.

The protein localises to the cytoplasm. It catalyses the reaction tRNA(Thr) + L-threonine + ATP = L-threonyl-tRNA(Thr) + AMP + diphosphate + H(+). Its function is as follows. Catalyzes the attachment of threonine to tRNA(Thr) in a two-step reaction: L-threonine is first activated by ATP to form Thr-AMP and then transferred to the acceptor end of tRNA(Thr). Also edits incorrectly charged L-seryl-tRNA(Thr). The sequence is that of Threonine--tRNA ligase from Prosthecochloris aestuarii (strain DSM 271 / SK 413).